A 269-amino-acid polypeptide reads, in one-letter code: Formamidopyrimidine-DNA glycosylase (269 aa).

Residue proline 2 is the Schiff-base intermediate with DNA of the active site. The active-site Proton donor is glutamate 3. The active-site Proton donor; for beta-elimination activity is the lysine 57. Histidine 90, arginine 109, and lysine 150 together coordinate DNA. The segment at 235-269 (FVYGRAGEPCRICGEQIESIKLGQRSTFFCRHCQY) adopts an FPG-type zinc-finger fold. The active-site Proton donor; for delta-elimination activity is the arginine 259.

This sequence belongs to the FPG family. Monomer. The cofactor is Zn(2+).

The catalysed reaction is Hydrolysis of DNA containing ring-opened 7-methylguanine residues, releasing 2,6-diamino-4-hydroxy-5-(N-methyl)formamidopyrimidine.. It catalyses the reaction 2'-deoxyribonucleotide-(2'-deoxyribose 5'-phosphate)-2'-deoxyribonucleotide-DNA = a 3'-end 2'-deoxyribonucleotide-(2,3-dehydro-2,3-deoxyribose 5'-phosphate)-DNA + a 5'-end 5'-phospho-2'-deoxyribonucleoside-DNA + H(+). Involved in base excision repair of DNA damaged by oxidation or by mutagenic agents. Acts as a DNA glycosylase that recognizes and removes damaged bases. Has a preference for oxidized purines, such as 7,8-dihydro-8-oxoguanine (8-oxoG). Has AP (apurinic/apyrimidinic) lyase activity and introduces nicks in the DNA strand. Cleaves the DNA backbone by beta-delta elimination to generate a single-strand break at the site of the removed base with both 3'- and 5'-phosphates. The chain is Formamidopyrimidine-DNA glycosylase from Photorhabdus laumondii subsp. laumondii (strain DSM 15139 / CIP 105565 / TT01) (Photorhabdus luminescens subsp. laumondii).